We begin with the raw amino-acid sequence, 361 residues long: Free fatty acid receptor 4 (361 aa).

Residues 1–45 are Extracellular-facing; it reads MSPECARAAGDAPLRSLEQANRTRFSFFSDVKGDHRLLLAAVETT. A glycan (N-linked (GlcNAc...) asparagine) is linked at asparagine 21. Residues 46–66 traverse the membrane as a helical segment; that stretch reads VLALIFAVSLLGNVCALVLVA. Over 67–77 the chain is Cytoplasmic; that stretch reads RRRRRGTTACL. The chain crosses the membrane as a helical span at residues 78–98; the sequence is VLNLFCADLLFISAIPLVLAV. Residues 99-112 lie on the Extracellular side of the membrane; that stretch reads RWTEAWLLGPVACH. Cysteines 111 and 194 form a disulfide. Residues 113-133 traverse the membrane as a helical segment; it reads LLFYLMTLSGSVTILTLAAVS. Topologically, residues 134 to 156 are cytoplasmic; the sequence is LERMVCIVHLQRGVRGPGRRARA. A helical membrane pass occupies residues 157–177; sequence VLLTLIWGYSAVAALPLCVFF. Residues 178–204 are Extracellular-facing; sequence RVVPQRLPGADQEISICTLIWPTIAGE. The chain crosses the membrane as a helical span at residues 205-225; the sequence is ISWDVSFVTLNFLVPGLVIVI. Residues 226-268 are Cytoplasmic-facing; it reads SYSKILQITKASRKRLTVSLAYSESHQIRVSQQDFRLFRTLFL. A helical transmembrane segment spans residues 269–289; sequence LMVSFFIMWSPIIITILLILI. Residues 290-295 are Extracellular-facing; sequence QNFKQD. Residues 296-316 traverse the membrane as a helical segment; the sequence is LVIWPSLFFWVVAFTFANSAL. The Cytoplasmic segment spans residues 317–361; the sequence is NPILYNMTLCRNEWKKIFCCFWFPEKGAILTDTSVKRNDLSVISG. Phosphothreonine is present on residues threonine 347 and threonine 349. Phosphoserine occurs at positions 350, 357, and 360.

The protein belongs to the G-protein coupled receptor 1 family. As to quaternary structure, interacts (via C-terminus) with ARRB2 following LCFAs stimulation. Post-translationally, phosphorylated at two clusters of Ser and Thr residues located in the intracellular C-terminus. Prerequisite for FFAR4 internalization via an ARRB2-dependent pathway. In terms of tissue distribution, highly expressed in lung and colon.

The protein resides in the cell membrane. The protein localises to the endosome membrane. Its subcellular location is the lysosome membrane. It is found in the cell projection. It localises to the cilium membrane. G-protein-coupled receptor for long-chain fatty acids (LCFAs) with a major role in adipogenesis, energy metabolism and inflammation. Signals via G-protein and beta-arrestin pathways. LCFAs sensing initiates activation of phosphoinositidase C-linked G proteins GNAQ and GNA11 (G(q)/G(11)), inducing a variety of cellular responses via second messenger pathways such as intracellular calcium mobilization, modulation of cyclic adenosine monophosphate (cAMP) production, and mitogen-activated protein kinases (MAPKs). After LCFAs binding, associates with beta-arrestin ARRB2 that acts as an adapter protein coupling the receptor to specific downstream signaling pathways, as well as mediating receptor endocytosis. In response to dietary fats, plays an important role in the regulation of adipocyte proliferation and differentiation. Acts as a receptor for omega-3 polyunsaturated fatty acids (PUFAs) at primary cilium of perivascular preadipocytes, initiating an adipogenic program via cAMP and CTCF-dependent chromatin remodeling that ultimately results in transcriptional activation of adipogenic genes and cell cycle entry. Induces differentiation of brown and beige adipocytes probably via autocrine and endocrine functions of FGF21 hormone. Contributes to the thermogenic activation of brown adipose tissue and the browning of white adipose tissue. Activates brown adipocytes by initiating intracellular calcium signaling leading to mitochondrial depolarization and fission, and overall increased mitochondrial respiration. Consequently stimulates fatty acid uptake and oxidation in mitochondria together with UCP1-mediated thermogenic respiration, eventually reducing fat mass. Regulates bi-potential differentiation of bone marrow mesenchymal stem cells toward osteoblasts or adipocytes likely by up-regulating distinct integrins. In response to dietary fats regulates hormone secretion and appetite. Stimulates GIP and GLP1 secretion from enteroendocrine cells as well as GCG secretion in pancreatic alpha cells, thereby playing a role in the regulation of blood glucose levels. Negatively regulates glucose-induced SST secretion in pancreatic delta cells. Mediates LCFAs inhibition of GHRL secretion, an appetite-controlling hormone. In taste buds, contributes to sensing of dietary fatty acids by the gustatory system. During the inflammatory response, promotes anti-inflammatory M2 macrophage differentiation in adipose tissue. Mediates the anti-inflammatory effects of omega-3 PUFAs via inhibition of NLRP3 inflammasome activation. In this pathway, interacts with adapter protein ARRB2 and inhibits the priming step triggered by Toll-like receptors (TLRs) at the level of TAK1 and TAB1. Further inhibits the activation step when ARRB2 directly associates with NLRP3, leading to inhibition of pro-inflammatory cytokine release. Mediates LCFAs anti-apoptotic effects. The polypeptide is Free fatty acid receptor 4 (FFAR4) (Macaca fascicularis (Crab-eating macaque)).